Here is a 776-residue protein sequence, read N- to C-terminus: Protein SEY1 (776 aa).

Residues 1 to 681 lie on the Cytoplasmic side of the membrane; the sequence is MADRSAIQLI…KRSIITTRTH (681 aa). The GB1/RHD3-type G domain maps to 34–263; it reads GLDYHVISVF…TENYYFKPQY (230 aa). 44-51 contributes to the GTP binding site; sequence GSQSSGKS. The chain crosses the membrane as a helical span at residues 682–702; the sequence is IPPWIYVLLAVLGWNEFVAVI. At 703 to 705 the chain is on the lumenal side; that stretch reads RNP. A helical membrane pass occupies residues 706-726; the sequence is LFVTLTLILGATFFVIHKFGL. Residues 727–776 are Cytoplasmic-facing; the sequence is WGPVVNVVQSAVGETRTAIKDKLRQFVVEDHEVKESFEMKDFSKNEQKEK.

The protein belongs to the TRAFAC class dynamin-like GTPase superfamily. GB1/RHD3 GTPase family. RHD3 subfamily. Interacts with RTN1 and YOP1; GTP binding is not required for these interactions.

The protein localises to the endoplasmic reticulum membrane. Functionally, cooperates with the reticulon proteins RTN1 and RTN2 and the tubule-shaping DP1 family protein YOP1 to generate and maintain the structure of the tubular endoplasmic reticulum network. Has GTPase activity, which is required for its function in ER organization. The sequence is that of Protein SEY1 from Saccharomyces cerevisiae (strain YJM789) (Baker's yeast).